We begin with the raw amino-acid sequence, 722 residues long: Probable glycerol-3-phosphate dehydrogenase, mitochondrial (722 aa).

The N-terminal 43 residues, 1–43, are a transit peptide targeting the mitochondrion; that stretch reads MSWVRFTKTGVAVVATSAAAVLALDMTNERRFQRQVKDHFRTV. 76–104 is a binding site for FAD; sequence DVLIIGGGATGAGVALDAQTRGLKTALVE. 2 EF-hand domains span residues 624–659 and 660–695; these read EEMQ…HNQK and IDER…LKGG. Ca(2+) contacts are provided by Asp-673, Asn-675, Asn-677, Glu-679, and Glu-684.

It belongs to the FAD-dependent glycerol-3-phosphate dehydrogenase family. It depends on FAD as a cofactor.

The protein resides in the mitochondrion. The enzyme catalyses a quinone + sn-glycerol 3-phosphate = dihydroxyacetone phosphate + a quinol. Its pathway is polyol metabolism; glycerol degradation via glycerol kinase pathway; glycerone phosphate from sn-glycerol 3-phosphate (anaerobic route): step 1/1. Calcium-binding enhances the activity of the enzyme. The protein is Probable glycerol-3-phosphate dehydrogenase, mitochondrial of Caenorhabditis elegans.